Reading from the N-terminus, the 206-residue chain is Large ribosomal subunit protein uL4 (206 aa).

The disordered stretch occupies residues 48–97 (THAVKNRSLVSGGGKKPWKQKHTGRARQGSTRASQWVGGGKAMGPKPRDY). The segment covering 63–72 (KPWKQKHTGR) has biased composition (basic residues).

It belongs to the universal ribosomal protein uL4 family. As to quaternary structure, part of the 50S ribosomal subunit.

Functionally, one of the primary rRNA binding proteins, this protein initially binds near the 5'-end of the 23S rRNA. It is important during the early stages of 50S assembly. It makes multiple contacts with different domains of the 23S rRNA in the assembled 50S subunit and ribosome. Forms part of the polypeptide exit tunnel. The chain is Large ribosomal subunit protein uL4 from Anaeromyxobacter dehalogenans (strain 2CP-C).